The primary structure comprises 482 residues: Proline--tRNA ligase (482 aa).

Belongs to the class-II aminoacyl-tRNA synthetase family. ProS type 3 subfamily. As to quaternary structure, homodimer.

The protein localises to the cytoplasm. It carries out the reaction tRNA(Pro) + L-proline + ATP = L-prolyl-tRNA(Pro) + AMP + diphosphate. Catalyzes the attachment of proline to tRNA(Pro) in a two-step reaction: proline is first activated by ATP to form Pro-AMP and then transferred to the acceptor end of tRNA(Pro). The chain is Proline--tRNA ligase from Mycoplasmopsis synoviae (strain 53) (Mycoplasma synoviae).